The chain runs to 316 residues: 4-hydroxy-3-methylbut-2-enyl diphosphate reductase (316 aa).

Residue Cys12 coordinates [4Fe-4S] cluster. Residues His41 and His74 each contribute to the (2E)-4-hydroxy-3-methylbut-2-enyl diphosphate site. Dimethylallyl diphosphate-binding residues include His41 and His74. 2 residues coordinate isopentenyl diphosphate: His41 and His74. Cys96 is a binding site for [4Fe-4S] cluster. Residue His124 participates in (2E)-4-hydroxy-3-methylbut-2-enyl diphosphate binding. Dimethylallyl diphosphate is bound at residue His124. His124 is a binding site for isopentenyl diphosphate. The active-site Proton donor is Glu126. Residue Thr167 coordinates (2E)-4-hydroxy-3-methylbut-2-enyl diphosphate. Cys197 serves as a coordination point for [4Fe-4S] cluster. Residues Ser225, Ser226, Asn227, and Ser269 each contribute to the (2E)-4-hydroxy-3-methylbut-2-enyl diphosphate site. Dimethylallyl diphosphate is bound by residues Ser225, Ser226, Asn227, and Ser269. Residues Ser225, Ser226, Asn227, and Ser269 each coordinate isopentenyl diphosphate.

Belongs to the IspH family. In terms of assembly, homodimer. The cofactor is [4Fe-4S] cluster.

The catalysed reaction is isopentenyl diphosphate + 2 oxidized [2Fe-2S]-[ferredoxin] + H2O = (2E)-4-hydroxy-3-methylbut-2-enyl diphosphate + 2 reduced [2Fe-2S]-[ferredoxin] + 2 H(+). It catalyses the reaction dimethylallyl diphosphate + 2 oxidized [2Fe-2S]-[ferredoxin] + H2O = (2E)-4-hydroxy-3-methylbut-2-enyl diphosphate + 2 reduced [2Fe-2S]-[ferredoxin] + 2 H(+). The protein operates within isoprenoid biosynthesis; dimethylallyl diphosphate biosynthesis; dimethylallyl diphosphate from (2E)-4-hydroxy-3-methylbutenyl diphosphate: step 1/1. Its pathway is isoprenoid biosynthesis; isopentenyl diphosphate biosynthesis via DXP pathway; isopentenyl diphosphate from 1-deoxy-D-xylulose 5-phosphate: step 6/6. Catalyzes the conversion of 1-hydroxy-2-methyl-2-(E)-butenyl 4-diphosphate (HMBPP) into a mixture of isopentenyl diphosphate (IPP) and dimethylallyl diphosphate (DMAPP). Acts in the terminal step of the DOXP/MEP pathway for isoprenoid precursor biosynthesis. In Sodalis glossinidius (strain morsitans), this protein is 4-hydroxy-3-methylbut-2-enyl diphosphate reductase.